The primary structure comprises 444 residues: Phosphoglucosamine mutase (444 aa).

Ser102 functions as the Phosphoserine intermediate in the catalytic mechanism. The Mg(2+) site is built by Ser102, Asp241, Asp243, and Asp245. Position 102 is a phosphoserine (Ser102).

It belongs to the phosphohexose mutase family. It depends on Mg(2+) as a cofactor. In terms of processing, activated by phosphorylation.

It carries out the reaction alpha-D-glucosamine 1-phosphate = D-glucosamine 6-phosphate. In terms of biological role, catalyzes the conversion of glucosamine-6-phosphate to glucosamine-1-phosphate. The polypeptide is Phosphoglucosamine mutase (Histophilus somni (strain 2336) (Haemophilus somnus)).